The sequence spans 93 residues: Antitoxin RelF (93 aa).

It belongs to the phD/YefM antitoxin family. As to quaternary structure, interacts with toxin RelG, which neutralizes the toxin. Also interacts with toxins RelE and RelK in vitro, in M.smegmatis coexpression with non-cognate toxins increases the toxicity of RelE but not of RelK.

In terms of biological role, antitoxin component of a type II toxin-antitoxin (TA) system. Upon expression in M.smegmatis neutralizes the effect of toxin RelE2. Functionally, induces its own promoter, in combination with RelG represses its own promoter. Has been seen to bind DNA in complex with toxin RelG but not alone. The polypeptide is Antitoxin RelF (relF) (Mycobacterium tuberculosis (strain ATCC 25618 / H37Rv)).